The primary structure comprises 85 residues: Cell division protein ZapA (85 aa).

Residues Ala-60–Glu-85 are a coiled coil.

This sequence belongs to the ZapA family. Type 2 subfamily. In terms of assembly, homodimer. Interacts with FtsZ.

The protein resides in the cytoplasm. Its function is as follows. Activator of cell division through the inhibition of FtsZ GTPase activity, therefore promoting FtsZ assembly into bundles of protofilaments necessary for the formation of the division Z ring. It is recruited early at mid-cell but it is not essential for cell division. This Bacillus pumilus (strain SAFR-032) protein is Cell division protein ZapA.